Reading from the N-terminus, the 172-residue chain is Nicotinamide-nucleotide adenylyltransferase (172 aa).

The protein belongs to the archaeal NMN adenylyltransferase family.

Its subcellular location is the cytoplasm. It catalyses the reaction beta-nicotinamide D-ribonucleotide + ATP + H(+) = diphosphate + NAD(+). It participates in cofactor biosynthesis; NAD(+) biosynthesis; NAD(+) from nicotinamide D-ribonucleotide: step 1/1. The polypeptide is Nicotinamide-nucleotide adenylyltransferase (Sulfurisphaera tokodaii (strain DSM 16993 / JCM 10545 / NBRC 100140 / 7) (Sulfolobus tokodaii)).